The chain runs to 938 residues: Auxilin (938 aa).

Positions 19-41 are disordered; the sequence is AAAGENRMKDSENKGASSPDMEP. A run of 3 repeats spans residues 61–64, 65–68, and 69–72. Residues 61-72 form a 3 X 4 AA approximate tandem repeats region; it reads NLKDNLKDTLKD. One can recognise a Phosphatase tensin-type domain in the interval 80–247; that stretch reads SVSSYTKGDL…GYMCDLLADK (168 aa). The residue at position 137 (Ser137) is a Phosphoserine. Cys189 serves as the catalytic Phosphocysteine intermediate. Residues 253-391 enclose the C2 tensin-type domain; it reads FKPLTIKAIT…FQVTLDIEVQ (139 aa). The SH3-binding motif lies at 434–442; the sequence is PADLPPDHP. The tract at residues 467–801 is disordered; that stretch reads EEDHAALVNQ…GKGSTNLEGK (335 aa). Ser478 and Ser481 each carry phosphoserine. The segment covering 531 to 548 has biased composition (polar residues); sequence DVSTNFSSLAAPPSNSEL. A compositionally biased stretch (low complexity) spans 559–569; the sequence is TGPAQAGQAGV. Composition is skewed to polar residues over residues 579–596 and 624–654; these read VSAQSTPRRTATSASASP and FLNTSSASSDPFLQPTRSPSPTVHASSTPAV. Ser595 is subject to Phosphoserine. The span at 679–694 shows a compositional bias: low complexity; sequence SAATSPTGSSHGTPTH. Over residues 754–781 the composition is skewed to polar residues; that stretch reads NWQQTQSKPQSSMPHSSPQNRPNYNVSF. The region spanning 874–938 is the J domain; the sequence is TKWKPVGMAD…FENQGQKPLY (65 aa).

As to quaternary structure, forms a complex composed of HSPA8, CLTC and DNAJC6. Interacts with HSPA8/HSC70 in an ATP-dependent manner; this interaction stimulates the HSPA8's ATPase activity. Interacts with CLTC; this interaction produces a local change in heavy-chain contacts, creating a detectable global distortion of the clathrin coat. Interacts with AP2A2. Interacts with DNM1(GTP-bound form); this interaction allows clathrin-coated vesicle (CCV) formation at the plasma membrane. The N-terminus is blocked. In terms of processing, phosphorylation at Ser-595 modulates its ability to bind CLTC and therefore the synaptic vesicle endocytosis (SVE).

It is found in the cytoplasmic vesicle. It localises to the clathrin-coated vesicle. May act as a protein phosphatase and/or a lipid phosphatase. Co-chaperone that recruits HSPA8/HSC70 to clathrin-coated vesicles (CCVs) and promotes the ATP-dependent dissociation of clathrin from CCVs and participates in clathrin-mediated endocytosis of synaptic vesicles and their recycling and also in intracellular trafficking. Firstly, binds tightly to the clathrin cages, at a ratio of one DNAJC6 per clathrin triskelion. The HSPA8:ATP complex then binds to the clathrin-auxilin cage, initially at a ratio of one HSPA8 per triskelion leading to ATP hydrolysis stimulation and causing a conformational change in the HSPA8. This cycle is repeated three times to drive to a complex containing the clathrin-auxilin cage associated to three HSPA8:ADP complex. The ATP hydrolysis of the third HSPA8:ATP complex leads to a concerted dismantling of the cage into component triskelia. Then, dissociates from the released triskelia and be recycled to initiate another cycle of HSPA8's recruitment. Also acts during the early steps of clathrin-coated vesicle (CCV) formation through its interaction with the GTP bound form of DNM1. The protein is Auxilin of Mus musculus (Mouse).